The sequence spans 185 residues: Ribosome-recycling factor (185 aa).

Belongs to the RRF family.

Its subcellular location is the cytoplasm. Responsible for the release of ribosomes from messenger RNA at the termination of protein biosynthesis. May increase the efficiency of translation by recycling ribosomes from one round of translation to another. The protein is Ribosome-recycling factor of Acidothermus cellulolyticus (strain ATCC 43068 / DSM 8971 / 11B).